We begin with the raw amino-acid sequence, 36 residues long: Peptide POLARIS (36 aa).

It belongs to the POLARIS peptide family. As to expression, mostly expressed in the embryonic root from the heart stage and in the seedling primary and lateral root tips, especially in the columella initials and lateral root cap. Also detectable in aerial parts of the seedling, sepals and leaves, principally in vascular tissues of the lamina and petiole.

In terms of biological role, required for correct root growth and vascular development, probably by modulating both cell division rate in meristems and cell elongation in roots. Negative regulator of the ethylene signaling pathway that modulates microtubule cytoskeleton dynamics and auxin transport and homeostasis, and possibly cytokinin signaling, thus influencing root growth and lateral root development. In Arabidopsis thaliana (Mouse-ear cress), this protein is Peptide POLARIS (PLS).